Reading from the N-terminus, the 125-residue chain is Histone H2A, orphon (125 aa).

Basic residues predominate over residues 1 to 18 (MSGRGKGGKVKAKAKSRS). The segment at 1-21 (MSGRGKGGKVKAKAKSRSSRA) is disordered. S2 carries the post-translational modification N-acetylserine. At S2 the chain carries Phosphoserine. Residue K119 forms a Glycyl lysine isopeptide (Lys-Gly) (interchain with G-Cter in ubiquitin) linkage.

This sequence belongs to the histone H2A family. As to quaternary structure, the nucleosome is a histone octamer containing two molecules each of H2A, H2B, H3 and H4 assembled in one H3-H4 heterotetramer and two H2A-H2B heterodimers. The octamer wraps approximately 147 bp of DNA. Monoubiquitination of Lys-119 gives a specific tag for epigenetic transcriptional repression. Post-translationally, phosphorylation on Ser-2 is enhanced during mitosis. Phosphorylation on Ser-2 directly represses transcription.

Its subcellular location is the nucleus. The protein localises to the chromosome. Functionally, core component of nucleosome. Nucleosomes wrap and compact DNA into chromatin, limiting DNA accessibility to the cellular machineries which require DNA as a template. Histones thereby play a central role in transcription regulation, DNA repair, DNA replication and chromosomal stability. DNA accessibility is regulated via a complex set of post-translational modifications of histones, also called histone code, and nucleosome remodeling. This is Histone H2A, orphon from Chironomus thummi thummi (Midge).